The primary structure comprises 129 residues: Dormancy-associated protein 2 (129 aa).

The N-terminal stretch at 1–25 (MDSRKAMLILGLLAMVLLISSEVSA) is a signal peptide. A disordered region spans residues 110–129 (GGYHGGGGHGGHGGASNNGN).

Belongs to the DRM1/ARP family. In terms of tissue distribution, expressed in axilary buds. Detected in growing stems, leaflets and floral organs, but not in roots.

The polypeptide is Dormancy-associated protein 2 (Pisum sativum (Garden pea)).